The sequence spans 303 residues: UDP-3-O-acyl-N-acetylglucosamine deacetylase (303 aa).

Positions 78, 237, and 241 each coordinate Zn(2+). The active-site Proton donor is histidine 264.

Belongs to the LpxC family. The cofactor is Zn(2+).

It catalyses the reaction a UDP-3-O-[(3R)-3-hydroxyacyl]-N-acetyl-alpha-D-glucosamine + H2O = a UDP-3-O-[(3R)-3-hydroxyacyl]-alpha-D-glucosamine + acetate. Its pathway is glycolipid biosynthesis; lipid IV(A) biosynthesis; lipid IV(A) from (3R)-3-hydroxytetradecanoyl-[acyl-carrier-protein] and UDP-N-acetyl-alpha-D-glucosamine: step 2/6. Catalyzes the hydrolysis of UDP-3-O-myristoyl-N-acetylglucosamine to form UDP-3-O-myristoylglucosamine and acetate, the committed step in lipid A biosynthesis. The protein is UDP-3-O-acyl-N-acetylglucosamine deacetylase of Chromohalobacter salexigens (strain ATCC BAA-138 / DSM 3043 / CIP 106854 / NCIMB 13768 / 1H11).